The sequence spans 137 residues: Small ribosomal subunit protein uS12 (137 aa).

Positions 1–57 are disordered; that stretch reads MPTINQLVRKPRKSKVEKSKSPALNVGYNSHKKVQTNVSSPQKRGVATRVGTMTPKK. D102 carries the 3-methylthioaspartic acid modification.

It belongs to the universal ribosomal protein uS12 family. Part of the 30S ribosomal subunit. Contacts proteins S8 and S17. May interact with IF1 in the 30S initiation complex.

With S4 and S5 plays an important role in translational accuracy. Its function is as follows. Interacts with and stabilizes bases of the 16S rRNA that are involved in tRNA selection in the A site and with the mRNA backbone. Located at the interface of the 30S and 50S subunits, it traverses the body of the 30S subunit contacting proteins on the other side and probably holding the rRNA structure together. The combined cluster of proteins S8, S12 and S17 appears to hold together the shoulder and platform of the 30S subunit. In Streptococcus pneumoniae serotype 2 (strain D39 / NCTC 7466), this protein is Small ribosomal subunit protein uS12.